The following is an 853-amino-acid chain: DNA mismatch repair protein MutS (853 aa).

Position 614–621 (614–621 (GPNMGGKS)) interacts with ATP.

Belongs to the DNA mismatch repair MutS family.

Functionally, this protein is involved in the repair of mismatches in DNA. It is possible that it carries out the mismatch recognition step. This protein has a weak ATPase activity. The polypeptide is DNA mismatch repair protein MutS (Escherichia coli O81 (strain ED1a)).